The following is a 123-amino-acid chain: Galectin-2 (123 aa).

Residues 4–123 (KVEIMNMDMK…LRYLSVQGGF (120 aa)) form the Galectin domain. A beta-D-galactoside is bound at residue 65-71 (WGKEQRD).

As to quaternary structure, homodimer.

Its function is as follows. This protein binds beta-galactoside. Its physiological function is not yet known. The polypeptide is Galectin-2 (LGALS2) (Sus scrofa (Pig)).